A 188-amino-acid polypeptide reads, in one-letter code: CASP-like protein 4B1 (188 aa).

Basic and acidic residues predominate over residues 1 to 11 (MTNPDKQKPVE). The interval 1-34 (MTNPDKQKPVEVTDVETAAEKTSEPTPASGTSTI) is disordered. At 1–46 (MTNPDKQKPVEVTDVETAAEKTSEPTPASGTSTITQRWKREDLIKK) the chain is on the cytoplasmic side. The span at 24 to 34 (EPTPASGTSTI) shows a compositional bias: polar residues. The helical transmembrane segment at 47–67 (ASPITRGICLLFSLLAFLIMV) threads the bilayer. The Extracellular segment spans residues 68–84 (SNKHGYGRNFNEYEEYR). The helical transmembrane segment at 85 to 105 (YVLAISIISTLYTAWQTFAHF) threads the bilayer. At 106 to 120 (SKREFFDRRTSTLVD) the chain is on the cytoplasmic side. Residues 121–141 (FSGDQIVAYLLISAASSAIPL) traverse the membrane as a helical segment. Over 142–156 (TNRFREGQDNIFTDS) the chain is Extracellular. Residues 157 to 177 (AASAISMAIFAFVALALSALF) traverse the membrane as a helical segment. Over 178-188 (SGYKLSTHSFI) the chain is Cytoplasmic.

The protein belongs to the Casparian strip membrane proteins (CASP) family. In terms of assembly, homodimer and heterodimers.

The protein resides in the cell membrane. The protein is CASP-like protein 4B1 of Arabidopsis lyrata subsp. lyrata (Lyre-leaved rock-cress).